Consider the following 191-residue polypeptide: MHNVVFVLGPPGSGKGTICAKIQENLNYVHLSAGDLLRAERQREGSEFGALIESHIKNGSIVPVEITCSLLENAMKACGDAKGFLVDGFPRNEDNLQGWNKQMDGKALVQFVLFLSCPVSICIERCLNRGQGRTDDNEESLKKRVETYNQQTFPIIEHFEKSGLVREVKSERPVDVVYADVEKVFDAANKK.

12–17 (GSGKGT) lines the ATP pocket. Residues 32–62 (SAGDLLRAERQREGSEFGALIESHIKNGSIV) form an NMP region. Residues Arg-38, 60 to 62 (SIV), and 88 to 91 (GFPR) contribute to the a ribonucleoside 5'-phosphate site. A CMP-binding site is contributed by Asn-95. The segment at 128 to 136 (NRGQGRTDD) is LID. An ATP-binding site is contributed by Arg-129. Positions 133 and 144 each coordinate a ribonucleoside 5'-phosphate. An ATP-binding site is contributed by Arg-172.

It belongs to the adenylate kinase family. UMP-CMP kinase subfamily. As to quaternary structure, monomer. Mg(2+) is required as a cofactor. As to expression, expressed in neurons and the pharynx.

The protein localises to the cytoplasm. It localises to the nucleus. It carries out the reaction CMP + ATP = CDP + ADP. It catalyses the reaction dCMP + ATP = dCDP + ADP. The catalysed reaction is UMP + ATP = UDP + ADP. In terms of biological role, catalyzes the phosphorylation of pyrimidine nucleoside monophosphates at the expense of ATP. Plays an important role in de novo pyrimidine nucleotide biosynthesis. Has preference for UMP and CMP as phosphate acceptors. The sequence is that of UMP-CMP kinase 2 from Caenorhabditis elegans.